A 385-amino-acid chain; its full sequence is tRNA-specific 2-thiouridylase MnmA (385 aa).

ATP contacts are provided by residues 29–36 (GLSGGVDS) and Leu-55. Cys-116 (nucleophile) is an active-site residue. A disulfide bridge connects residues Cys-116 and Cys-225. Gly-141 contributes to the ATP binding site. An interaction with tRNA region spans residues 175–177 (KDQ). Cys-225 functions as the Cysteine persulfide intermediate in the catalytic mechanism. The interaction with tRNA stretch occupies residues 330–331 (RY).

It belongs to the MnmA/TRMU family.

It is found in the cytoplasm. The enzyme catalyses S-sulfanyl-L-cysteinyl-[protein] + uridine(34) in tRNA + AH2 + ATP = 2-thiouridine(34) in tRNA + L-cysteinyl-[protein] + A + AMP + diphosphate + H(+). In terms of biological role, catalyzes the 2-thiolation of uridine at the wobble position (U34) of tRNA, leading to the formation of s(2)U34. In Prochlorococcus marinus (strain AS9601), this protein is tRNA-specific 2-thiouridylase MnmA.